The chain runs to 343 residues: Holliday junction branch migration complex subunit RuvB (343 aa).

The interval 1 to 186 is large ATPase domain (RuvB-L); sequence MTEEFDIRQE…FGINLHLEYY (186 aa). Residues Leu25, Arg26, Gly67, Lys70, Thr71, Thr72, 133-135, Arg176, Tyr186, and Arg223 contribute to the ATP site; that span reads EDY. Thr71 contributes to the Mg(2+) binding site. The small ATPAse domain (RuvB-S) stretch occupies residues 187–257; that stretch reads DVHTITGIVE…IACYALEALN (71 aa). The tract at residues 260–343 is head domain (RuvB-H); sequence RYGLDNVDHK…PRPHRPSLFD (84 aa). Positions 315 and 320 each coordinate DNA.

The protein belongs to the RuvB family. In terms of assembly, homohexamer. Forms an RuvA(8)-RuvB(12)-Holliday junction (HJ) complex. HJ DNA is sandwiched between 2 RuvA tetramers; dsDNA enters through RuvA and exits via RuvB. An RuvB hexamer assembles on each DNA strand where it exits the tetramer. Each RuvB hexamer is contacted by two RuvA subunits (via domain III) on 2 adjacent RuvB subunits; this complex drives branch migration. In the full resolvosome a probable DNA-RuvA(4)-RuvB(12)-RuvC(2) complex forms which resolves the HJ.

It is found in the cytoplasm. The enzyme catalyses ATP + H2O = ADP + phosphate + H(+). Its function is as follows. The RuvA-RuvB-RuvC complex processes Holliday junction (HJ) DNA during genetic recombination and DNA repair, while the RuvA-RuvB complex plays an important role in the rescue of blocked DNA replication forks via replication fork reversal (RFR). RuvA specifically binds to HJ cruciform DNA, conferring on it an open structure. The RuvB hexamer acts as an ATP-dependent pump, pulling dsDNA into and through the RuvAB complex. RuvB forms 2 homohexamers on either side of HJ DNA bound by 1 or 2 RuvA tetramers; 4 subunits per hexamer contact DNA at a time. Coordinated motions by a converter formed by DNA-disengaged RuvB subunits stimulates ATP hydrolysis and nucleotide exchange. Immobilization of the converter enables RuvB to convert the ATP-contained energy into a lever motion, pulling 2 nucleotides of DNA out of the RuvA tetramer per ATP hydrolyzed, thus driving DNA branch migration. The RuvB motors rotate together with the DNA substrate, which together with the progressing nucleotide cycle form the mechanistic basis for DNA recombination by continuous HJ branch migration. Branch migration allows RuvC to scan DNA until it finds its consensus sequence, where it cleaves and resolves cruciform DNA. In Porphyromonas gingivalis (strain ATCC BAA-308 / W83), this protein is Holliday junction branch migration complex subunit RuvB.